The following is a 456-amino-acid chain: Phosphomethylpyrimidine synthase (456 aa).

Substrate contacts are provided by residues asparagine 80, methionine 109, tyrosine 139, histidine 175, serine 195–glycine 197, aspartate 236–arginine 239, and glutamate 275. A Zn(2+)-binding site is contributed by histidine 279. A substrate-binding site is contributed by tyrosine 302. Histidine 343 contacts Zn(2+). The [4Fe-4S] cluster site is built by cysteine 423, cysteine 426, and cysteine 431.

Belongs to the ThiC family. The cofactor is [4Fe-4S] cluster.

The catalysed reaction is 5-amino-1-(5-phospho-beta-D-ribosyl)imidazole + S-adenosyl-L-methionine = 4-amino-2-methyl-5-(phosphooxymethyl)pyrimidine + CO + 5'-deoxyadenosine + formate + L-methionine + 3 H(+). The protein operates within cofactor biosynthesis; thiamine diphosphate biosynthesis. Catalyzes the synthesis of the hydroxymethylpyrimidine phosphate (HMP-P) moiety of thiamine from aminoimidazole ribotide (AIR) in a radical S-adenosyl-L-methionine (SAM)-dependent reaction. In Prochlorococcus marinus (strain MIT 9301), this protein is Phosphomethylpyrimidine synthase.